The chain runs to 232 residues: Large ribosomal subunit protein uL1 (232 aa).

The protein belongs to the universal ribosomal protein uL1 family. As to quaternary structure, part of the 50S ribosomal subunit.

Its function is as follows. Binds directly to 23S rRNA. The L1 stalk is quite mobile in the ribosome, and is involved in E site tRNA release. In terms of biological role, protein L1 is also a translational repressor protein, it controls the translation of the L11 operon by binding to its mRNA. This is Large ribosomal subunit protein uL1 from Azorhizobium caulinodans (strain ATCC 43989 / DSM 5975 / JCM 20966 / LMG 6465 / NBRC 14845 / NCIMB 13405 / ORS 571).